The chain runs to 169 residues: MAKREPIHDNSIRTEWEAKIAKLTSVDQATKFIQDFRLAYTSPFRKSYDIDVDYQYIERKIEEKLSVLKTEKLPVADLITKATTGEDRAAVEATWIAKIKAAKSKYEADGIHIEFRQLYKPPVLPVNVFLRTDAALGTVLMEIRNTDYYGTPLEGLRKEPGVKVLHLQA.

As to quaternary structure, m.trichosporium has two forms of methane monooxygenase, a soluble and a membrane-bound type. The soluble type consists of four components (A to D): protein A, comprising three chains, in an alpha-2, beta-2, gamma-2 configuration, is a nonheme iron protein containing an unusual mu-hydroxo bridge structure at its active site and interacts with both oxygen and methane.

The catalysed reaction is methane + NADH + O2 + H(+) = methanol + NAD(+) + H2O. It catalyses the reaction methane + NADPH + O2 + H(+) = methanol + NADP(+) + H2O. Functionally, responsible for the initial oxygenation of methane to methanol in methanotrophs. It also catalyzes the monohydroxylation of a variety of unactivated alkenes, alicyclic, aromatic and heterocyclic compounds. The sequence is that of Methane monooxygenase component A gamma chain (mmoZ) from Methylosinus trichosporium.